Here is a 429-residue protein sequence, read N- to C-terminus: Enolase (429 aa).

Glutamine 167 contributes to the (2R)-2-phosphoglycerate binding site. Catalysis depends on glutamate 209, which acts as the Proton donor. Residues aspartate 246, glutamate 289, and aspartate 316 each coordinate Mg(2+). The (2R)-2-phosphoglycerate site is built by lysine 341, arginine 370, serine 371, and lysine 392. The active-site Proton acceptor is lysine 341.

Belongs to the enolase family. Component of the RNA degradosome, a multiprotein complex involved in RNA processing and mRNA degradation. Mg(2+) serves as cofactor.

The protein localises to the cytoplasm. Its subcellular location is the secreted. The protein resides in the cell surface. It catalyses the reaction (2R)-2-phosphoglycerate = phosphoenolpyruvate + H2O. Its pathway is carbohydrate degradation; glycolysis; pyruvate from D-glyceraldehyde 3-phosphate: step 4/5. Its function is as follows. Catalyzes the reversible conversion of 2-phosphoglycerate (2-PG) into phosphoenolpyruvate (PEP). It is essential for the degradation of carbohydrates via glycolysis. In Ectopseudomonas mendocina (strain ymp) (Pseudomonas mendocina), this protein is Enolase.